Here is a 686-residue protein sequence, read N- to C-terminus: Translation initiation factor IF-2 (686 aa).

A disordered region spans residues 54–105 (KPSVADEFEVEEKVVRSKKNSNKKKKKGKGNEDKRQENFAGRQQTQTVETPD). Basic residues predominate over residues 69-81 (RSKKNSNKKKKKG). A tr-type G domain is found at 188-357 (ERPAVVTIMG…LLVSEVEEYK (170 aa)). The G1 stretch occupies residues 197-204 (GHVDHGKT). Residue 197–204 (GHVDHGKT) coordinates GTP. A G2 region spans residues 222–226 (GITQH). A G3 region spans residues 243 to 246 (DTPG). Residues 243–247 (DTPGH) and 297–300 (NKMD) contribute to the GTP site. A G4 region spans residues 297-300 (NKMD). Positions 333-335 (SAI) are G5.

Belongs to the TRAFAC class translation factor GTPase superfamily. Classic translation factor GTPase family. IF-2 subfamily.

The protein localises to the cytoplasm. Functionally, one of the essential components for the initiation of protein synthesis. Protects formylmethionyl-tRNA from spontaneous hydrolysis and promotes its binding to the 30S ribosomal subunits. Also involved in the hydrolysis of GTP during the formation of the 70S ribosomal complex. In Bacillus cereus (strain 03BB102), this protein is Translation initiation factor IF-2.